Consider the following 102-residue polypeptide: NADH-quinone oxidoreductase subunit K 1 (102 aa).

Transmembrane regions (helical) follow at residues 5–25 (LYEV…CVVA), 30–50 (VIMM…TFVG), and 62–82 (VFSL…LAMV).

This sequence belongs to the complex I subunit 4L family. NDH-1 is composed of 14 different subunits. Subunits NuoA, H, J, K, L, M, N constitute the membrane sector of the complex.

Its subcellular location is the cell inner membrane. The enzyme catalyses a quinone + NADH + 5 H(+)(in) = a quinol + NAD(+) + 4 H(+)(out). In terms of biological role, NDH-1 shuttles electrons from NADH, via FMN and iron-sulfur (Fe-S) centers, to quinones in the respiratory chain. The immediate electron acceptor for the enzyme in this species is believed to be ubiquinone. Couples the redox reaction to proton translocation (for every two electrons transferred, four hydrogen ions are translocated across the cytoplasmic membrane), and thus conserves the redox energy in a proton gradient. The sequence is that of NADH-quinone oxidoreductase subunit K 1 from Geobacter sp. (strain M21).